Here is a 768-residue protein sequence, read N- to C-terminus: DNA ligase (768 aa).

NAD(+) is bound by residues 61-65, 110-111, and E146; these read DAEFD and SL. The active-site N6-AMP-lysine intermediate is K148. R169, E206, K322, and K346 together coordinate NAD(+). 4 residues coordinate Zn(2+): C443, C446, C462, and C468. The region spanning 661-750 is the BRCT domain; it reads SVPRTLEGLT…PAQTGTEAEA (90 aa). Residues 739–768 form a disordered region; sequence NGPAQTGTEAEAATDEATVVDETAAEAATE. Over residues 746–768 the composition is skewed to low complexity; it reads TEAEAATDEATVVDETAAEAATE.

Belongs to the NAD-dependent DNA ligase family. LigA subfamily. Mg(2+) serves as cofactor. Requires Mn(2+) as cofactor.

The enzyme catalyses NAD(+) + (deoxyribonucleotide)n-3'-hydroxyl + 5'-phospho-(deoxyribonucleotide)m = (deoxyribonucleotide)n+m + AMP + beta-nicotinamide D-nucleotide.. Functionally, DNA ligase that catalyzes the formation of phosphodiester linkages between 5'-phosphoryl and 3'-hydroxyl groups in double-stranded DNA using NAD as a coenzyme and as the energy source for the reaction. It is essential for DNA replication and repair of damaged DNA. The chain is DNA ligase from Paenarthrobacter aurescens (strain TC1).